We begin with the raw amino-acid sequence, 350 residues long: MGVNLRELIPPEARREVELRALSGYVLALDAYNMLYQFLTAIRQPDGTPLLDREGRVTSHLSGLFYRTINLVEEGIKPVYVFDGKPPEMKSREVEERLRRKAEAEARYRRAVEAGEVEEARKYAMMAARLTSDMVEESKELLDAMGMPWVQAPAEGEAQAAYMARKGDAWATGSQDYDSLLFGSPRLVRNLAITGRRKLPGRDQYVEIKPEIIELEPLLSKLGITREQLIAVGILLGTDYNPGGVRGYGPKTALRLVKSLGDPMKVLASVPRGEYDPDYLRKVYEYFLNPPVTDDYKIEFRKPDQDKVREILVERHDFNPERVERALERLGKAYREKLRGRQSRLDMWFG.

Positions 1 to 101 are N-domain; that stretch reads MGVNLRELIP…REVEERLRRK (101 aa). The Mg(2+) site is built by Asp-30, Asp-83, Glu-155, Glu-157, Asp-176, Asp-178, and Asp-239. Residues 119-261 form an I-domain region; the sequence is EARKYAMMAA…TALRLVKSLG (143 aa). The interval 341 to 349 is interaction with PCNA; sequence RQSRLDMWF.

Belongs to the XPG/RAD2 endonuclease family. FEN1 subfamily. In terms of assembly, interacts with PCNA. PCNA stimulates the nuclease activity without altering cleavage specificity. It depends on Mg(2+) as a cofactor.

Functionally, structure-specific nuclease with 5'-flap endonuclease and 5'-3' exonuclease activities involved in DNA replication and repair. During DNA replication, cleaves the 5'-overhanging flap structure that is generated by displacement synthesis when DNA polymerase encounters the 5'-end of a downstream Okazaki fragment. Binds the unpaired 3'-DNA end and kinks the DNA to facilitate 5' cleavage specificity. Cleaves one nucleotide into the double-stranded DNA from the junction in flap DNA, leaving a nick for ligation. Also involved in the base excision repair (BER) pathway. Acts as a genome stabilization factor that prevents flaps from equilibrating into structures that lead to duplications and deletions. Also possesses 5'-3' exonuclease activity on nicked or gapped double-stranded DNA. This Aeropyrum pernix (strain ATCC 700893 / DSM 11879 / JCM 9820 / NBRC 100138 / K1) protein is Flap endonuclease 1.